Consider the following 122-residue polypeptide: uncharacterized protein (122 aa).

A signal peptide spans Met1 to Ala18. Asn15 carries N-linked (GlcNAc...) asparagine glycosylation.

This is an uncharacterized protein from Saccharomyces cerevisiae (strain ATCC 204508 / S288c) (Baker's yeast).